The following is a 185-amino-acid chain: Ribosome maturation factor RimM (185 aa).

The PRC barrel domain occupies 103-177 (SEEYYWYEIL…SIIVKKIEWY (75 aa)).

This sequence belongs to the RimM family. In terms of assembly, binds ribosomal protein uS19.

The protein localises to the cytoplasm. Its function is as follows. An accessory protein needed during the final step in the assembly of 30S ribosomal subunit, possibly for assembly of the head region. Essential for efficient processing of 16S rRNA. May be needed both before and after RbfA during the maturation of 16S rRNA. It has affinity for free ribosomal 30S subunits but not for 70S ribosomes. This chain is Ribosome maturation factor RimM, found in Petrotoga mobilis (strain DSM 10674 / SJ95).